Here is a 469-residue protein sequence, read N- to C-terminus: Neuraminidase (469 aa).

Residues 1–6 are Intravirion-facing; it reads MNPNQK. The chain crosses the membrane as a helical span at residues 7-27; sequence IITIGSICMVVGIISLILQIG. The interval 11–33 is involved in apical transport and lipid raft association; that stretch reads GSICMVVGIISLILQIGNIVSIW. Topologically, residues 28-469 are virion surface; the sequence is NIVSIWISHS…GAELPFTIDK (442 aa). The interval 36 to 90 is hypervariable stalk region; sequence HSIQTGNQNHTGTCNQSIITYKNSTWVNQTYVNISNTNVVAGKDTTSVILAGNSS. N-linked (GlcNAc...) asparagine; by host glycosylation is found at Asn-44, Asn-50, Asn-58, Asn-63, Asn-68, and Asn-88. The segment at 91 to 469 is head of neuraminidase; sequence LCPIRGWAIY…GAELPFTIDK (379 aa). Intrachain disulfides connect Cys-92/Cys-417, Cys-124/Cys-129, Cys-184/Cys-231, Cys-233/Cys-238, Cys-279/Cys-292, Cys-281/Cys-290, Cys-318/Cys-335, and Cys-421/Cys-446. Position 118 (Arg-118) interacts with substrate. N-linked (GlcNAc...) asparagine; by host glycosylation is present at Asn-146. Catalysis depends on Asp-151, which acts as the Proton donor/acceptor. Arg-152 contributes to the substrate binding site. The N-linked (GlcNAc...) asparagine; by host glycan is linked to Asn-235. 277 to 278 contributes to the substrate binding site; that stretch reads EE. Arg-293 contributes to the substrate binding site. 4 residues coordinate Ca(2+): Asp-294, Gly-298, Asp-324, and Asn-344. N-linked (GlcNAc...) asparagine; by host glycosylation occurs at Asn-365. Arg-368 serves as a coordination point for substrate. The active-site Nucleophile is the Tyr-402.

The protein belongs to the glycosyl hydrolase 34 family. In terms of assembly, homotetramer. The cofactor is Ca(2+). Post-translationally, N-glycosylated.

The protein localises to the virion membrane. The protein resides in the host apical cell membrane. The enzyme catalyses Hydrolysis of alpha-(2-&gt;3)-, alpha-(2-&gt;6)-, alpha-(2-&gt;8)- glycosidic linkages of terminal sialic acid residues in oligosaccharides, glycoproteins, glycolipids, colominic acid and synthetic substrates.. Its activity is regulated as follows. Inhibited by the neuraminidase inhibitors zanamivir (Relenza) and oseltamivir (Tamiflu). These drugs interfere with the release of progeny virus from infected cells and are effective against all influenza strains. Resistance to neuraminidase inhibitors is quite rare. In terms of biological role, catalyzes the removal of terminal sialic acid residues from viral and cellular glycoconjugates. Cleaves off the terminal sialic acids on the glycosylated HA during virus budding to facilitate virus release. Additionally helps virus spread through the circulation by further removing sialic acids from the cell surface. These cleavages prevent self-aggregation and ensure the efficient spread of the progeny virus from cell to cell. Otherwise, infection would be limited to one round of replication. Described as a receptor-destroying enzyme because it cleaves a terminal sialic acid from the cellular receptors. May facilitate viral invasion of the upper airways by cleaving the sialic acid moieties on the mucin of the airway epithelial cells. Likely to plays a role in the budding process through its association with lipid rafts during intracellular transport. May additionally display a raft-association independent effect on budding. Plays a role in the determination of host range restriction on replication and virulence. Sialidase activity in late endosome/lysosome traffic seems to enhance virus replication. The protein is Neuraminidase of Aves (Human).